We begin with the raw amino-acid sequence, 425 residues long: Na(+)/H(+) antiporter NhaA 1 (425 aa).

11 helical membrane-spanning segments follow: residues 20–40, 65–85, 102–122, 131–151, 160–180, 183–203, 218–238, 272–292, 303–323, 342–362, and 373–393; these read AGGVILMAVAVLAMIVANSPL, PHLWINDALMAVFFLLVGLEI, LPFIAALGGMAAPALVFLAVT, GWAIPAATDIAFAIGVMALLG, LFLTTVAIVDDMGAVVIIALA, ASIKGIALLAAAVILGAMMAM, FVLLWFAVLVSGVHATIAGVL, FLIVPLFGFANAGISLEGFSL, IAAGLFIGKQLGIFSLIWAAV, LSVLCGIGFTMSLFIGMLAFA, and LGVITGSLLSGVLGYLVLRFA.

This sequence belongs to the NhaA Na(+)/H(+) (TC 2.A.33) antiporter family.

It localises to the cell inner membrane. It catalyses the reaction Na(+)(in) + 2 H(+)(out) = Na(+)(out) + 2 H(+)(in). Its function is as follows. Na(+)/H(+) antiporter that extrudes sodium in exchange for external protons. This chain is Na(+)/H(+) antiporter NhaA 1, found in Novosphingobium aromaticivorans (strain ATCC 700278 / DSM 12444 / CCUG 56034 / CIP 105152 / NBRC 16084 / F199).